The sequence spans 66 residues: Large ribosomal subunit protein bL33c (66 aa).

Belongs to the bacterial ribosomal protein bL33 family.

The protein localises to the plastid. Its subcellular location is the chloroplast. The sequence is that of Large ribosomal subunit protein bL33c from Ipomoea purpurea (Common morning glory).